The sequence spans 125 residues: Desulfoferrodoxin homolog (125 aa).

Residues Cys-10, Cys-13, Cys-29, Cys-30, His-49, His-69, His-75, Cys-116, and His-119 each coordinate Fe cation.

Belongs to the desulfoferrodoxin family. It depends on Fe(3+) as a cofactor. The cofactor is Cu(2+).

This is Desulfoferrodoxin homolog from Archaeoglobus fulgidus (strain ATCC 49558 / DSM 4304 / JCM 9628 / NBRC 100126 / VC-16).